The sequence spans 509 residues: Kynureninase 1 (509 aa).

Pyridoxal 5'-phosphate-binding positions include Leu154, Thr155, 183–186 (FPSD), Asp270, His273, and Tyr295. The residue at position 296 (Lys296) is an N6-(pyridoxal phosphate)lysine. 2 residues coordinate pyridoxal 5'-phosphate: Trp345 and Asn373.

The protein belongs to the kynureninase family. In terms of assembly, homodimer. Pyridoxal 5'-phosphate serves as cofactor.

The protein resides in the cytoplasm. The catalysed reaction is L-kynurenine + H2O = anthranilate + L-alanine + H(+). The enzyme catalyses 3-hydroxy-L-kynurenine + H2O = 3-hydroxyanthranilate + L-alanine + H(+). The protein operates within amino-acid degradation; L-kynurenine degradation; L-alanine and anthranilate from L-kynurenine: step 1/1. It functions in the pathway cofactor biosynthesis; NAD(+) biosynthesis; quinolinate from L-kynurenine: step 2/3. Its function is as follows. Catalyzes the cleavage of L-kynurenine (L-Kyn) and L-3-hydroxykynurenine (L-3OHKyn) into anthranilic acid (AA) and 3-hydroxyanthranilic acid (3-OHAA), respectively. This chain is Kynureninase 1, found in Chaetomium globosum (strain ATCC 6205 / CBS 148.51 / DSM 1962 / NBRC 6347 / NRRL 1970) (Soil fungus).